The chain runs to 185 residues: Ribosome-recycling factor (185 aa).

The protein belongs to the RRF family.

It localises to the cytoplasm. In terms of biological role, responsible for the release of ribosomes from messenger RNA at the termination of protein biosynthesis. May increase the efficiency of translation by recycling ribosomes from one round of translation to another. The sequence is that of Ribosome-recycling factor from Lacticaseibacillus casei (strain BL23) (Lactobacillus casei).